The chain runs to 128 residues: Small ribosomal subunit protein eS8 (128 aa).

The interval Met1 to Asp41 is disordered.

This sequence belongs to the eukaryotic ribosomal protein eS8 family. Part of the 30S ribosomal subunit.

The polypeptide is Small ribosomal subunit protein eS8 (Sulfolobus acidocaldarius (strain ATCC 33909 / DSM 639 / JCM 8929 / NBRC 15157 / NCIMB 11770)).